A 465-amino-acid polypeptide reads, in one-letter code: Ribulose bisphosphate carboxylase large chain (465 aa).

Lys-4 carries the post-translational modification N6,N6,N6-trimethyllysine. Substrate is bound by residues Asn-113 and Thr-163. The Proton acceptor role is filled by Lys-165. Lys-167 is a binding site for substrate. Mg(2+)-binding residues include Lys-191, Asp-193, and Glu-194. Position 191 is an N6-carboxylysine (Lys-191). His-284 functions as the Proton acceptor in the catalytic mechanism. Residues Arg-285, His-317, and Ser-369 each coordinate substrate.

Belongs to the RuBisCO large chain family. Type I subfamily. As to quaternary structure, heterohexadecamer of 8 large chains and 8 small chains; disulfide-linked. The disulfide link is formed within the large subunit homodimers. Mg(2+) serves as cofactor. In terms of processing, the disulfide bond which can form in the large chain dimeric partners within the hexadecamer appears to be associated with oxidative stress and protein turnover.

It localises to the plastid. It is found in the chloroplast. It carries out the reaction 2 (2R)-3-phosphoglycerate + 2 H(+) = D-ribulose 1,5-bisphosphate + CO2 + H2O. The catalysed reaction is D-ribulose 1,5-bisphosphate + O2 = 2-phosphoglycolate + (2R)-3-phosphoglycerate + 2 H(+). Its function is as follows. RuBisCO catalyzes two reactions: the carboxylation of D-ribulose 1,5-bisphosphate, the primary event in carbon dioxide fixation, as well as the oxidative fragmentation of the pentose substrate in the photorespiration process. Both reactions occur simultaneously and in competition at the same active site. This Manilkara zapota (Sapodilla plum) protein is Ribulose bisphosphate carboxylase large chain.